The sequence spans 202 residues: Na(+)-translocating NADH-quinone reductase subunit E (202 aa).

6 helical membrane passes run 11 to 31, 35 to 55, 79 to 99, 114 to 134, 144 to 164, and 180 to 200; these read SVFIENMALSFFLGMCTFLAV, VTTAMGLGVAVIVVLAISVPA, LSFLKFITFIGVIAALVQILE, GIFLPLITVNCAIFGAVAFMV, LVFGVGSGIGWALAIVLLAAV, and LGITFISAGLMALGFMSFSGV.

It belongs to the NqrDE/RnfAE family. Composed of six subunits; NqrA, NqrB, NqrC, NqrD, NqrE and NqrF.

The protein resides in the cell inner membrane. The enzyme catalyses a ubiquinone + n Na(+)(in) + NADH + H(+) = a ubiquinol + n Na(+)(out) + NAD(+). In terms of biological role, NQR complex catalyzes the reduction of ubiquinone-1 to ubiquinol by two successive reactions, coupled with the transport of Na(+) ions from the cytoplasm to the periplasm. NqrA to NqrE are probably involved in the second step, the conversion of ubisemiquinone to ubiquinol. This chain is Na(+)-translocating NADH-quinone reductase subunit E, found in Shewanella denitrificans (strain OS217 / ATCC BAA-1090 / DSM 15013).